The chain runs to 170 residues: Myosin regulatory light chain 1 (170 aa).

Positions 1-13 (MSKAAKKKSSKKR) are enriched in basic residues. The interval 1–22 (MSKAAKKKSSKKRSGSEAAQFD) is disordered. EF-hand domains follow at residues 24-59 (KTIQ…MGQI) and 93-128 (DPEA…KRGE). Positions 37, 39, 41, and 48 each coordinate Ca(2+).

In terms of assembly, myosin is a hexamer of 2 heavy chains and 4 light chains (two regulatory light chains and two essential light chains).

The protein is Myosin regulatory light chain 1 (mlc-1) of Caenorhabditis elegans.